Here is a 315-residue protein sequence, read N- to C-terminus: Ribosomal RNA small subunit methyltransferase H (315 aa).

S-adenosyl-L-methionine-binding positions include 36 to 38, D56, F80, D102, and Q109; that span reads GGH.

The protein belongs to the methyltransferase superfamily. RsmH family.

Its subcellular location is the cytoplasm. It catalyses the reaction cytidine(1402) in 16S rRNA + S-adenosyl-L-methionine = N(4)-methylcytidine(1402) in 16S rRNA + S-adenosyl-L-homocysteine + H(+). Specifically methylates the N4 position of cytidine in position 1402 (C1402) of 16S rRNA. This Proteus mirabilis (strain HI4320) protein is Ribosomal RNA small subunit methyltransferase H.